We begin with the raw amino-acid sequence, 460 residues long: MLO-like protein 9 (460 aa).

Residues 1–21 (MAGGGGGGGGEGPRQLDQTPT) lie on the Extracellular side of the membrane. Residues 22 to 42 (WAVSTVCGVIILISIILELII) form a helical membrane-spanning segment. The Cytoplasmic segment spans residues 43–67 (HKVGEVFERKKKKALFEALEKIKNE). Residues 68 to 88 (LMVLGFISLLLTFGQNYIASI) form a helical membrane-spanning segment. Over 89–158 (CVPSRYGHAM…ISLNALHQVH (70 aa)) the chain is Extracellular. The helical transmembrane segment at 159–179 (IFIFFLAVFHVIYSAITMMLG) threads the bilayer. The Cytoplasmic portion of the chain corresponds to 180–289 (RAKIRGWKVW…KVVVGIRPEL (110 aa)). Residues 290 to 310 (WAFVMLFLLFDVHGWYVTAVI) traverse the membrane as a helical segment. The Extracellular portion of the chain corresponds to 311–315 (TMIPP). The chain crosses the membrane as a helical span at residues 316–336 (LLTLAIGTKLQAIISYMALEI). The Cytoplasmic portion of the chain corresponds to 337–366 (QERHAVIQGMPVVNVSDQHFWFEKPDLVLH). Residues 367-387 (MIHFVLFQNAFEITYFFWIWY) traverse the membrane as a helical segment. Residues 388-398 (EFGLRSCFHHH) are Extracellular-facing. Residues 399-419 (FGLIIIRVCLGVGVQFLCSYI) traverse the membrane as a helical segment. At 420–460 (TLPLYALVTQMGSTMKRSVFDEQTSKALEQWHKKARKKNEK) the chain is on the cytoplasmic side. The interval 441-460 (EQTSKALEQWHKKARKKNEK) is calmodulin-binding.

The protein belongs to the MLO family.

Its subcellular location is the membrane. Functionally, may be involved in modulation of pathogen defense and leaf cell death. Activity seems to be regulated by Ca(2+)-dependent calmodulin binding and seems not to require heterotrimeric G proteins. The polypeptide is MLO-like protein 9 (MLO9) (Arabidopsis thaliana (Mouse-ear cress)).